The following is a 490-amino-acid chain: GTPase Der (490 aa).

EngA-type G domains lie at 3–166 and 200–373; these read PVVA…AEAM and IKLA…DSAT. GTP contacts are provided by residues 9 to 16, 56 to 60, 118 to 121, 206 to 213, 253 to 257, and 318 to 321; these read GRPNVGKS, DTGGI, NKVD, GKPNVGKS, DTAGV, and NKWD. Residues 374-458 enclose the KH-like domain; the sequence is RRVSTSMLTR…PIQLRFQEGG (85 aa). Residues 470-490 are disordered; sequence TVSQERRRKRMVGHIRDKNKD.

Belongs to the TRAFAC class TrmE-Era-EngA-EngB-Septin-like GTPase superfamily. EngA (Der) GTPase family. Associates with the 50S ribosomal subunit.

Its function is as follows. GTPase that plays an essential role in the late steps of ribosome biogenesis. The protein is GTPase Der of Shewanella pealeana (strain ATCC 700345 / ANG-SQ1).